Reading from the N-terminus, the 269-residue chain is Eukaryotic translation initiation factor 3 subunit G-1 (269 aa).

In terms of domain architecture, RRM spans 188–266 (AAIRISNLSE…LILSVEWSKP (79 aa)).

It belongs to the eIF-3 subunit G family. As to quaternary structure, component of the eukaryotic translation initiation factor 3 (eIF-3) complex. The eIF-3 complex interacts with pix.

The protein resides in the cytoplasm. Its function is as follows. RNA-binding component of the eukaryotic translation initiation factor 3 (eIF-3) complex, which is involved in protein synthesis of a specialized repertoire of mRNAs and, together with other initiation factors, stimulates binding of mRNA and methionyl-tRNAi to the 40S ribosome. The eIF-3 complex specifically targets and initiates translation of a subset of mRNAs involved in cell proliferation. This subunit can bind 18S rRNA. In Drosophila sechellia (Fruit fly), this protein is Eukaryotic translation initiation factor 3 subunit G-1.